We begin with the raw amino-acid sequence, 225 residues long: PKHD-type hydroxylase YbiX (225 aa).

The Fe2OG dioxygenase domain maps to Thr-78–Ser-177. His-96, Asp-98, and His-158 together coordinate Fe cation. Arg-168 is a binding site for 2-oxoglutarate.

Requires Fe(2+) as cofactor. It depends on L-ascorbate as a cofactor.

This Escherichia fergusonii (strain ATCC 35469 / DSM 13698 / CCUG 18766 / IAM 14443 / JCM 21226 / LMG 7866 / NBRC 102419 / NCTC 12128 / CDC 0568-73) protein is PKHD-type hydroxylase YbiX.